The primary structure comprises 105 residues: Transmembrane protein 273 (105 aa).

The first 19 residues, 1–19, serve as a signal peptide directing secretion; the sequence is MNLGVSMLRILFLLDVGGA. The Extracellular portion of the chain corresponds to 20-38; the sequence is QVLATGKTPGAEIDFKYAL. Residues 39-59 traverse the membrane as a helical segment; that stretch reads IGTAVGVAISAGFLALKICMI. Over 60-105 the chain is Cytoplasmic; it reads RRHLFDDDSSDLKSTPGGLSDTIPLKKRAPRRNHNFSKRDAQVIEL.

It is found in the membrane. The sequence is that of Transmembrane protein 273 from Homo sapiens (Human).